We begin with the raw amino-acid sequence, 188 residues long: Elongation factor P (188 aa).

The protein belongs to the elongation factor P family.

The protein resides in the cytoplasm. It participates in protein biosynthesis; polypeptide chain elongation. In terms of biological role, involved in peptide bond synthesis. Stimulates efficient translation and peptide-bond synthesis on native or reconstituted 70S ribosomes in vitro. Probably functions indirectly by altering the affinity of the ribosome for aminoacyl-tRNA, thus increasing their reactivity as acceptors for peptidyl transferase. The polypeptide is Elongation factor P (Streptomyces coelicolor (strain ATCC BAA-471 / A3(2) / M145)).